A 382-amino-acid chain; its full sequence is Alkane 1-monooxygenase 1 (382 aa).

4 consecutive transmembrane segments (helical) span residues 10-30 (MLAIKKYAYWLWLLLALSMPF), 43-63 (FWAFSLVIAVFGIGPLLDMLF), 90-110 (LATVPVLIGTLVWAAGVFVAF), and 121-141 (WILSMGTVMGAVGIVVAHELI). Residues histidine 138 and histidine 142 each coordinate Fe cation. The chain crosses the membrane as a helical span at residues 146–166 (ALEQAAGGILLAAVCYAGFKV). Fe cation contacts are provided by histidine 168, histidine 172, and histidine 173. Residues 236-256 (LALLVGFGWAFGWLGMVFFLG) form a helical membrane-spanning segment. Fe cation-binding residues include histidine 312, histidine 315, and histidine 316.

Belongs to the fatty acid desaturase type 1 family. AlkB subfamily. The cofactor is Fe(3+).

The protein resides in the cell inner membrane. The enzyme catalyses octane + 2 reduced [rubredoxin] + O2 + 2 H(+) = 2 oxidized [rubredoxin] + octan-1-ol + H2O. It participates in hydrocarbon metabolism; alkane degradation. Catalyzes the hydroxylation of n-alkanes in the presence of a NADH-rubredoxin reductase and rubredoxin. It preferably hydroxylases C16-C24 hydrocarbons. The polypeptide is Alkane 1-monooxygenase 1 (alkB1) (Pseudomonas aeruginosa (strain ATCC 15692 / DSM 22644 / CIP 104116 / JCM 14847 / LMG 12228 / 1C / PRS 101 / PAO1)).